The sequence spans 365 residues: 3-dehydroquinate synthase (365 aa).

NAD(+) contacts are provided by residues 107 to 111 (GVIGD), 131 to 132 (TT), Lys-144, and Lys-153. Zn(2+) contacts are provided by Glu-186, His-251, and His-268.

It belongs to the sugar phosphate cyclases superfamily. Dehydroquinate synthase family. The cofactor is Co(2+). Zn(2+) is required as a cofactor. Requires NAD(+) as cofactor.

The protein resides in the cytoplasm. It catalyses the reaction 7-phospho-2-dehydro-3-deoxy-D-arabino-heptonate = 3-dehydroquinate + phosphate. Its pathway is metabolic intermediate biosynthesis; chorismate biosynthesis; chorismate from D-erythrose 4-phosphate and phosphoenolpyruvate: step 2/7. Catalyzes the conversion of 3-deoxy-D-arabino-heptulosonate 7-phosphate (DAHP) to dehydroquinate (DHQ). This chain is 3-dehydroquinate synthase, found in Picosynechococcus sp. (strain ATCC 27264 / PCC 7002 / PR-6) (Agmenellum quadruplicatum).